Reading from the N-terminus, the 530-residue chain is Bifunctional purine biosynthesis protein PurH (530 aa).

Residues 1–148 (MNNARPIRRA…KNHKDVTIVV (148 aa)) form the MGS-like domain.

The protein belongs to the PurH family.

It carries out the reaction (6R)-10-formyltetrahydrofolate + 5-amino-1-(5-phospho-beta-D-ribosyl)imidazole-4-carboxamide = 5-formamido-1-(5-phospho-D-ribosyl)imidazole-4-carboxamide + (6S)-5,6,7,8-tetrahydrofolate. The catalysed reaction is IMP + H2O = 5-formamido-1-(5-phospho-D-ribosyl)imidazole-4-carboxamide. It participates in purine metabolism; IMP biosynthesis via de novo pathway; 5-formamido-1-(5-phospho-D-ribosyl)imidazole-4-carboxamide from 5-amino-1-(5-phospho-D-ribosyl)imidazole-4-carboxamide (10-formyl THF route): step 1/1. It functions in the pathway purine metabolism; IMP biosynthesis via de novo pathway; IMP from 5-formamido-1-(5-phospho-D-ribosyl)imidazole-4-carboxamide: step 1/1. The polypeptide is Bifunctional purine biosynthesis protein PurH (Vibrio campbellii (strain ATCC BAA-1116)).